We begin with the raw amino-acid sequence, 377 residues long: UPF0754 membrane protein LMHCC_0318 (377 aa).

The next 2 membrane-spanning stretches (helical) occupy residues 1–21 (MSVL…GAMT) and 357–377 (YLGG…AMWI).

This sequence belongs to the UPF0754 family.

The protein localises to the cell membrane. In Listeria monocytogenes serotype 4a (strain HCC23), this protein is UPF0754 membrane protein LMHCC_0318.